The following is a 357-amino-acid chain: Chorismate synthase (357 aa).

Arg-47 is an NADP(+) binding site. Residues 123–125, Gly-281, 296–300, and Arg-324 contribute to the FMN site; these read RAS and KPTSS.

This sequence belongs to the chorismate synthase family. As to quaternary structure, homotetramer. It depends on FMNH2 as a cofactor.

The enzyme catalyses 5-O-(1-carboxyvinyl)-3-phosphoshikimate = chorismate + phosphate. It participates in metabolic intermediate biosynthesis; chorismate biosynthesis; chorismate from D-erythrose 4-phosphate and phosphoenolpyruvate: step 7/7. Catalyzes the anti-1,4-elimination of the C-3 phosphate and the C-6 proR hydrogen from 5-enolpyruvylshikimate-3-phosphate (EPSP) to yield chorismate, which is the branch point compound that serves as the starting substrate for the three terminal pathways of aromatic amino acid biosynthesis. This reaction introduces a second double bond into the aromatic ring system. This Chlamydia trachomatis serovar A (strain ATCC VR-571B / DSM 19440 / HAR-13) protein is Chorismate synthase.